The chain runs to 368 residues: Ceramide synthase hyl-1 (368 aa).

7 consecutive transmembrane segments (helical) span residues 27 to 47 (FVDLLVPIYLAIPLVIIRILW), 92 to 112 (ILECFWRFSYYTFAFLYGLYV), 138 to 158 (IWWYYMIETGFYYSLLIGSTF), 165 to 185 (FWQLMVHHVITIFLLSSSWTI), 191 to 211 (GTLILLSHDVSDVFLEGGKLV), 225 to 245 (FVLFFSSWVATRLIYYPFIVI), and 275 to 295 (LIVFALILLFFLHIFWTFIIL). Positions 90–303 (KKILECFWRF…ILRIAYRTST (214 aa)) constitute a TLC domain. The disordered stretch occupies residues 306–368 (QAKDVRSDSD…ARHRRAPRKE (63 aa)). A compositionally biased stretch (acidic residues) spans 343–353 (TDDDDDEGEEE). A compositionally biased stretch (basic residues) spans 357-368 (RKARHRRAPRKE).

This sequence belongs to the sphingosine N-acyltransferase family.

Its subcellular location is the membrane. The enzyme catalyses a very long-chain fatty acyl-CoA + a sphingoid base = an N-(very-long-chain fatty acyl)-sphingoid base + CoA + H(+). It catalyses the reaction 15-methylhexadecasphinganine + a fatty acyl-CoA = an N-acyl-15-methylhexadecasphinganine + CoA + H(+). The catalysed reaction is a fatty acyl-CoA + sphinganine = an N-acylsphinganine + CoA + H(+). It carries out the reaction sphinganine + tetradecanoyl-CoA = N-(tetradecanoyl)-sphinganine + CoA + H(+). The enzyme catalyses hexacosanoyl-CoA + sphinganine = N-hexacosanoylsphinganine + CoA + H(+). It functions in the pathway lipid metabolism; sphingolipid metabolism. Its function is as follows. Catalyzes the acylation of sphingoid bases to form ceramides, which are key players in cell signaling events such as extending lifespan and enhancing stress resistance. C.elegans contain specific sphingoid bases, which are unique or different in structure compared to the sphingoid bases found in other animals. Two examples of these distinctive compounds are: 15-methylhexadecasphinganine and 15-methylhexadecasphing-4-enine. Exhibits substrate preference for fatty acyl-coA chains containing carbon chain length (C16-C18) and very long chains (24 carbons and more). The polypeptide is Ceramide synthase hyl-1 (hyl-1) (Caenorhabditis elegans).